The sequence spans 99 residues: Nucleoid-associated protein SpyM3_1606 (99 aa).

The protein belongs to the YbaB/EbfC family. In terms of assembly, homodimer.

It localises to the cytoplasm. It is found in the nucleoid. In terms of biological role, binds to DNA and alters its conformation. May be involved in regulation of gene expression, nucleoid organization and DNA protection. The chain is Nucleoid-associated protein SpyM3_1606 from Streptococcus pyogenes serotype M3 (strain ATCC BAA-595 / MGAS315).